The chain runs to 347 residues: MDSFVSTYVWPAAIMIGQSLLLLVCLLVFIAYILLADRKIWAAVQLRRGPNVVGPWGLFQSFADLLKFVFKEPIIPAGANKAVFLLAPLVAVTLALATWAVIPLNQGWVIANINVGILYVFAISSLEVYGIIMGGWASNSKYPFLGALRSAAQMVSYEVSIGFVIVTVLLCAGSLNLTDIVNSQNHGLGTMMGMPASLLDWHWLSLFPMFVIFFISALAETNRPPFDLPEAESELVAGFMVEYGSTPYMMFMLGEYAAIVLMCALTTILFLGGWLPPLDIAVLNWVPGIIWFILKATLVFFMFGITKAIVPRYRYDQLMRLGWKVFLPLSLAMVVIVAFVLKLGGWA.

Transmembrane regions (helical) follow at residues 14–34 (IMIG…AYIL), 82–102 (AVFL…WAVI), 115–135 (VGIL…IMGG), 161–181 (IGFV…TDIV), 198–218 (LLDW…ISAL), 258–278 (AIVL…LPPL), 285–305 (WVPG…MFGI), and 321–341 (LGWK…AFVL).

The protein belongs to the complex I subunit 1 family. As to quaternary structure, NDH-1 is composed of 14 different subunits. Subunits NuoA, H, J, K, L, M, N constitute the membrane sector of the complex.

The protein resides in the cell inner membrane. The enzyme catalyses a quinone + NADH + 5 H(+)(in) = a quinol + NAD(+) + 4 H(+)(out). In terms of biological role, NDH-1 shuttles electrons from NADH, via FMN and iron-sulfur (Fe-S) centers, to quinones in the respiratory chain. The immediate electron acceptor for the enzyme in this species is believed to be ubiquinone. Couples the redox reaction to proton translocation (for every two electrons transferred, four hydrogen ions are translocated across the cytoplasmic membrane), and thus conserves the redox energy in a proton gradient. This subunit may bind ubiquinone. The sequence is that of NADH-quinone oxidoreductase subunit H from Allorhizobium ampelinum (strain ATCC BAA-846 / DSM 112012 / S4) (Agrobacterium vitis (strain S4)).